We begin with the raw amino-acid sequence, 473 residues long: Ribulose bisphosphate carboxylase large chain (473 aa).

The substrate site is built by Asn116 and Thr166. Residue Lys168 is the Proton acceptor of the active site. Residue Lys170 participates in substrate binding. The Mg(2+) site is built by Lys194, Asp196, and Glu197. At Lys194 the chain carries N6-carboxylysine. His287 functions as the Proton acceptor in the catalytic mechanism. Substrate contacts are provided by Arg288, His320, and Ser372.

The protein belongs to the RuBisCO large chain family. Type I subfamily. As to quaternary structure, heterohexadecamer of 8 large chains and 8 small chains. The cofactor is Mg(2+).

The catalysed reaction is 2 (2R)-3-phosphoglycerate + 2 H(+) = D-ribulose 1,5-bisphosphate + CO2 + H2O. The enzyme catalyses D-ribulose 1,5-bisphosphate + O2 = 2-phosphoglycolate + (2R)-3-phosphoglycerate + 2 H(+). RuBisCO catalyzes two reactions: the carboxylation of D-ribulose 1,5-bisphosphate, the primary event in carbon dioxide fixation, as well as the oxidative fragmentation of the pentose substrate. Both reactions occur simultaneously and in competition at the same active site. The chain is Ribulose bisphosphate carboxylase large chain from Nitrosomonas sp. (strain ENI-11).